The following is a 761-amino-acid chain: Subtilisin-like protease SBT3 (761 aa).

A signal peptide spans 1 to 22 (MELLHLLLFSWALSAHLFLALA). Positions 23–112 (QRSTYIVHLD…AYKDRTVEPH (90 aa)) are excised as a propeptide. Positions 26–110 (TYIVHLDKSL…ISAYKDRTVE (85 aa)) constitute an Inhibitor I9 domain. In terms of domain architecture, Peptidase S8 spans 116–606 (TSDFLKLNPS…AGHVDPNRAL (491 aa)). The active-site Charge relay system is aspartate 144. Cysteine 170 and cysteine 181 are joined by a disulfide. N-linked (GlcNAc...) (complex) asparagine; alternate glycans are attached at residues asparagine 177 and asparagine 203. N-linked (GlcNAc...) (paucimannose) asparagine; alternate glycans are attached at residues asparagine 177 and asparagine 203. Histidine 215 serves as the catalytic Charge relay system. Asparagine 376 carries an N-linked (GlcNAc...) (paucimannose) asparagine; partial glycan. A disulfide bond links cysteine 382 and cysteine 401. The active-site Charge relay system is the serine 538. A disordered region spans residues 574 to 598 (LDNTRKPIKDSDNNKAATPLDMGAG). Basic and acidic residues predominate over residues 575–586 (DNTRKPIKDSDN). The cysteines at positions 624 and 645 are disulfide-linked. Residues asparagine 697 and asparagine 745 are each glycosylated (N-linked (GlcNAc...) (complex) asparagine; alternate). 2 N-linked (GlcNAc...) (paucimannose) asparagine; alternate glycosylation sites follow: asparagine 697 and asparagine 745. The tract at residues 756 to 761 (PIIEVW) is necessary for prodomain cleavage and secretion.

Belongs to the peptidase S8 family. As to quaternary structure, homodimer. Propeptide is internally cleaved at Asn-38 and Asp-52 in a pH-dependent manner leading to the dissociation of the propeptide from the catalytic domain and resulting in the release of the active subtilase. Cleavage occurs at pH 5.7 and to a stronger extent at pH 5.2. As to expression, expressed in flowers, cotyledons and leaves with the highest expression in roots.

The protein localises to the secreted. Its activity is regulated as follows. Inhibited by 1 mM 4-(2-aminoethyl)-benzenesulfonyl fluoride (AEBSF), a general inhibitor of serine proteinases, but not by the more selective serine protease inhibitors N-alpha-tosyl-L-lysinyl-chloromethylketone (TLCK), N-tosyl-L-phenylalaninyl-chloromethylketone (TPCK), leupeptin, aprotinin or benzamidine. Its proteolytic activity is autoinhibited by the non-covalent binding of the propeptide to the catalytic domain. No effect on activity by the addition of CaCl(2) or calcium chelators. In terms of biological role, serine protease. Has preference for Gln in the P1 position and Lys in the P2 position of oligopeptide substrates. Active also with His in the P1 position. Involved in resistance against insects partly by regulating expression of systemic wound response genes and possibly by its post-ingestive activity in the insect gut. Apart from the role in defense, may be involved in regulation of pectin methylesterases (PMEs) activity and pectin methylesterification of the cell wall. The sequence is that of Subtilisin-like protease SBT3 from Solanum lycopersicum (Tomato).